A 633-amino-acid chain; its full sequence is Polypeptide N-acetylgalactosaminyltransferase 3 (633 aa).

Residues 1–19 (MAHLKRLVKLHIKRHYHKK) lie on the Cytoplasmic side of the membrane. The helical; Signal-anchor for type II membrane protein transmembrane segment at 20–37 (FWKLGAVIFFFIIVLVLM) threads the bilayer. At 38–633 (QREVSVQYSK…LQKWILSQND (596 aa)) the chain is on the lumenal side. Asparagine 132 carries N-linked (GlcNAc...) asparagine glycosylation. Positions 184–293 (LPTTSVIIVF…YGWLEPLLAR (110 aa)) are catalytic subdomain A. Mn(2+) is bound by residues aspartate 277 and histidine 279. An N-linked (GlcNAc...) asparagine glycan is attached at asparagine 297. Positions 356–418 (PIKTPTFAGG…PCSVVGHVFR (63 aa)) are catalytic subdomain B. Histidine 415 contributes to the Mn(2+) binding site. An N-linked (GlcNAc...) asparagine glycan is attached at asparagine 484. The region spanning 504–630 (VISGYIKSVG…SDPLQKWILS (127 aa)) is the Ricin B-type lectin domain. The cysteines at positions 517 and 535 are disulfide-linked. Residues aspartate 519, glutamate 522, histidine 536, and asparagine 541 each coordinate UDP-N-acetyl-alpha-D-galactosamine. 2 disulfides stabilise this stretch: cysteine 561–cysteine 574 and cysteine 605–cysteine 618.

This sequence belongs to the glycosyltransferase 2 family. GalNAc-T subfamily. It depends on Mn(2+) as a cofactor. Expressed in organs that contain secretory epithelial glands. Highly expressed in pancreas, skin, kidney and testis. Weakly expressed in prostate, ovary, intestine and colon. Also expressed in placenta and lung and fetal lung and fetal kidney.

Its subcellular location is the golgi apparatus. It is found in the golgi stack membrane. It catalyses the reaction L-seryl-[protein] + UDP-N-acetyl-alpha-D-galactosamine = a 3-O-[N-acetyl-alpha-D-galactosaminyl]-L-seryl-[protein] + UDP + H(+). The catalysed reaction is L-threonyl-[protein] + UDP-N-acetyl-alpha-D-galactosamine = a 3-O-[N-acetyl-alpha-D-galactosaminyl]-L-threonyl-[protein] + UDP + H(+). Its pathway is protein modification; protein glycosylation. Its function is as follows. Catalyzes the initial reaction in O-linked oligosaccharide biosynthesis, the transfer of an N-acetyl-D-galactosamine residue to a serine or threonine residue on the protein receptor. Has activity toward HIV envelope glycoprotein gp120, EA2, MUC2, MUC1A and MUC5AC. Probably glycosylates fibronectin in vivo. Glycosylates FGF23. The polypeptide is Polypeptide N-acetylgalactosaminyltransferase 3 (GALNT3) (Homo sapiens (Human)).